An 83-amino-acid chain; its full sequence is Conotoxin MiEr92 (83 aa).

A signal peptide spans 1 to 22 (MKLTCVLIVIMLFLTVCPLITA). The propeptide occupies 23 to 49 (DHSRDKQEHPAMRLKDRIRYLRRGKLT). Cystine bridges form between cysteine 52-cysteine 67, cysteine 59-cysteine 72, and cysteine 66-cysteine 81.

The protein belongs to the conotoxin O1 superfamily. Expressed by the venom duct.

It localises to the secreted. The chain is Conotoxin MiEr92 from Conus miles (Soldier cone).